Here is a 323-residue protein sequence, read N- to C-terminus: NADH-ubiquinone oxidoreductase chain 1 (323 aa).

Transmembrane regions (helical) follow at residues 8-28, 74-94, 105-125, 145-165, 176-196, 236-256, 258-278, and 298-318; these read VINPLAYIVPVLLAVAFLTLL, FLFLATPMLALTLALTLWAPM, LGVLFVLALSSLAVYSILGSG, ISYEVSLGLILLSVIIITGGF, SIWLLVPAWPLAAMWYISTLA, ILLMNTLSAVLFLGASHIPAF, ELTALNLMTKAALLSVVFLWV, and FLPLTLALVLWHLALPIALAG.

Belongs to the complex I subunit 1 family.

Its subcellular location is the mitochondrion inner membrane. The catalysed reaction is a ubiquinone + NADH + 5 H(+)(in) = a ubiquinol + NAD(+) + 4 H(+)(out). Core subunit of the mitochondrial membrane respiratory chain NADH dehydrogenase (Complex I) that is believed to belong to the minimal assembly required for catalysis. Complex I functions in the transfer of electrons from NADH to the respiratory chain. The immediate electron acceptor for the enzyme is believed to be ubiquinone. The polypeptide is NADH-ubiquinone oxidoreductase chain 1 (MT-ND1) (Oncorhynchus mykiss (Rainbow trout)).